Reading from the N-terminus, the 383-residue chain is Anhydro-N-acetylmuramic acid kinase (383 aa).

9-16 is a binding site for ATP; sequence GTSLDGID.

This sequence belongs to the anhydro-N-acetylmuramic acid kinase family.

It catalyses the reaction 1,6-anhydro-N-acetyl-beta-muramate + ATP + H2O = N-acetyl-D-muramate 6-phosphate + ADP + H(+). The protein operates within amino-sugar metabolism; 1,6-anhydro-N-acetylmuramate degradation. It functions in the pathway cell wall biogenesis; peptidoglycan recycling. Its function is as follows. Catalyzes the specific phosphorylation of 1,6-anhydro-N-acetylmuramic acid (anhMurNAc) with the simultaneous cleavage of the 1,6-anhydro ring, generating MurNAc-6-P. Is required for the utilization of anhMurNAc either imported from the medium or derived from its own cell wall murein, and thus plays a role in cell wall recycling. The sequence is that of Anhydro-N-acetylmuramic acid kinase from Clostridioides difficile (strain 630) (Peptoclostridium difficile).